The primary structure comprises 209 residues: Large ribosomal subunit protein uL3 (209 aa).

The protein belongs to the universal ribosomal protein uL3 family. As to quaternary structure, part of the 50S ribosomal subunit. Forms a cluster with proteins L14 and L19.

In terms of biological role, one of the primary rRNA binding proteins, it binds directly near the 3'-end of the 23S rRNA, where it nucleates assembly of the 50S subunit. The protein is Large ribosomal subunit protein uL3 of Oceanobacillus iheyensis (strain DSM 14371 / CIP 107618 / JCM 11309 / KCTC 3954 / HTE831).